A 260-amino-acid chain; its full sequence is MSIYTLGIDVGSTASKCIILKDGKEIVAKSLVAVGTGTSGPARSISEVLENAHMKKEDMAFTLATGYGRNSLEGIADKQMSELSCHAMGASFIWPNVHTVIDIGGQDVKVIHVENGTMTNFQMNDKCAAGTGRFLDVMANILEVKVSDLAELGAKSTKRVAISSTCTVFAESEVISQLSKGTDKIDIIAGIHRSVASRVIGLANRVGIVKDVVMTGGVAQNYGVRGALEEGLGVEIKTSPLAQYNGALGAALYAYKKAAK.

Position 12–16 (12–16 (STASK)) interacts with ATP. [4Fe-4S] cluster is bound by residues cysteine 127 and cysteine 166. ATP is bound by residues glutamine 220 and glutamine 243.

Belongs to the HgdC family. As to quaternary structure, homodimer. It depends on [4Fe-4S] cluster as a cofactor. Mg(2+) is required as a cofactor.

The catalysed reaction is ATP + H2O = ADP + phosphate + H(+). Its pathway is amino-acid degradation; L-glutamate degradation via hydroxyglutarate pathway; crotonoyl-CoA from L-glutamate: step 4/5. Inactivated by exposure to air within less than 15 minutes. Involved in the fermentation of L-glutamate via the hydroxyglutarate pathway. HgdC (CompA) has a very low ATPase activity, whose the role is to activate dehydratase HgdA-HgdB complex and then maintain an appropriate redox state via an ATP-dependent electron transfer. The dehydratase requires only catalytic amounts of ATP and substoichiometric amounts of HgdC (CompA) to be functional. This is (R)-2-hydroxyglutaryl-CoA dehydratase activating ATPase from Acidaminococcus fermentans (strain ATCC 25085 / DSM 20731 / CCUG 9996 / CIP 106432 / VR4).